The chain runs to 636 residues: uncharacterized protein (636 aa).

The zn(2)-C6 fungal-type DNA-binding region spans 10-36; sequence CLACRRKKVKCNRQYPCTRCLKYGEAC. Over residues 556–580 the composition is skewed to polar residues; it reads NSQSTSEFVSPISDTENGSSSQQVS. A disordered region spans residues 556–581; sequence NSQSTSEFVSPISDTENGSSSQQVSE.

It is found in the cytoplasm. The protein resides in the nucleus. This is an uncharacterized protein from Schizosaccharomyces pombe (strain 972 / ATCC 24843) (Fission yeast).